A 481-amino-acid polypeptide reads, in one-letter code: Delta 4,5-hexuronate-2-O-sulfatase (481 aa).

Residue serine 64 is modified to 3-oxoalanine (Ser). Cysteine 225, cysteine 226, histidine 462, and histidine 469 together coordinate Zn(2+). Residues 453-481 (VDADPRCRNHTPGYPSHEGPGAREILKRK) form a disordered region. A compositionally biased stretch (basic and acidic residues) spans 472 to 481 (PGAREILKRK).

Belongs to the sulfatase family. It depends on Zn(2+) as a cofactor. In terms of processing, the conversion to 3-oxoalanine (also known as C-formylglycine, FGly), of a serine or cysteine residue in prokaryotes and of a cysteine residue in eukaryotes, is critical for catalytic activity.

In terms of biological role, exosulfatase involved in the degradation of the glycosaminoglycans (GAGs) chondroitin sulfate (CS), dermatan sulfate (DS) and heparan sulfate (HS). 2-O-sulfatase active on unsaturated non-reducing end hexuronate units. Has a slight preference for HS-derived structures. GAG-specific sulfatases play a key role in the persistence of the major human gut symbiont B.thetaiotaomicron in the host gastrointestinal tract. The sequence is that of Delta 4,5-hexuronate-2-O-sulfatase from Bacteroides thetaiotaomicron (strain ATCC 29148 / DSM 2079 / JCM 5827 / CCUG 10774 / NCTC 10582 / VPI-5482 / E50).